Reading from the N-terminus, the 360-residue chain is Phosphoserine aminotransferase (360 aa).

Position 41 (arginine 41) interacts with L-glutamate. The pyridoxal 5'-phosphate site is built by tryptophan 101, threonine 152, aspartate 172, and glutamine 195. An N6-(pyridoxal phosphate)lysine modification is found at lysine 196. 237–238 (NT) provides a ligand contact to pyridoxal 5'-phosphate.

The protein belongs to the class-V pyridoxal-phosphate-dependent aminotransferase family. SerC subfamily. In terms of assembly, homodimer. Pyridoxal 5'-phosphate serves as cofactor.

It localises to the cytoplasm. The enzyme catalyses O-phospho-L-serine + 2-oxoglutarate = 3-phosphooxypyruvate + L-glutamate. It carries out the reaction 4-(phosphooxy)-L-threonine + 2-oxoglutarate = (R)-3-hydroxy-2-oxo-4-phosphooxybutanoate + L-glutamate. The protein operates within amino-acid biosynthesis; L-serine biosynthesis; L-serine from 3-phospho-D-glycerate: step 2/3. It functions in the pathway cofactor biosynthesis; pyridoxine 5'-phosphate biosynthesis; pyridoxine 5'-phosphate from D-erythrose 4-phosphate: step 3/5. Its function is as follows. Catalyzes the reversible conversion of 3-phosphohydroxypyruvate to phosphoserine and of 3-hydroxy-2-oxo-4-phosphonooxybutanoate to phosphohydroxythreonine. This chain is Phosphoserine aminotransferase, found in Burkholderia orbicola (strain MC0-3).